A 221-amino-acid chain; its full sequence is Ras-related protein Rab-27A (221 aa).

Position 2 is an N-acetylserine (Ser-2). Position 2 is a phosphoserine (Ser-2). A GTP-binding site is contributed by 16–24; sequence GDSGVGKTS. Residues 38–46 carry the Effector region motif; sequence FITTVGIDF. Residues 74 to 78, 133 to 136, and 163 to 165 each bind GTP; these read DTAGQ, NKSD, and SAA. Cys-123 and Cys-188 form a disulfide bridge. 2 S-geranylgeranyl cysteine lipidation sites follow: Cys-219 and Cys-221. Residue Cys-221 is modified to Cysteine methyl ester.

This sequence belongs to the small GTPase superfamily. Rab family. Binds SYTL1, SLAC2B, MYRIP, SYTL3, SYTL4 and SYTL5. Interacts with RPH3A and RPH3A. Binds MLPH and SYTL2. Interacts with UNC13D. Does not interact with the BLOC-3 complex (heterodimer of HPS1 and HPS4). Interacts (GDP-bound form preferentially) with DENND10. As to expression, high levels in eye, intestine, lung, pancreas and spleen, and low or absent in brain, liver, heart, kidney, and skeletal muscle.

It localises to the membrane. The protein localises to the melanosome. It is found in the late endosome. Its subcellular location is the lysosome. It catalyses the reaction GTP + H2O = GDP + phosphate + H(+). Its activity is regulated as follows. Regulated by guanine nucleotide exchange factors (GEFs) which promote the exchange of bound GDP for free GTP, GTPase activating proteins (GAPs) which increase the GTP hydrolysis activity, and GDP dissociation inhibitors which inhibit the dissociation of the nucleotide from the GTPase. Activated by GEFs such as DENND10. Small GTPase which cycles between active GTP-bound and inactive GDP-bound states. In its active state, binds to a variety of effector proteins to regulate homeostasis of late endocytic pathway, including endosomal positioning, maturation and secretion. Plays a role in cytotoxic granule exocytosis in lymphocytes. Required for both granule maturation and granule docking and priming at the immunologic synapse. The polypeptide is Ras-related protein Rab-27A (Rab27a) (Rattus norvegicus (Rat)).